We begin with the raw amino-acid sequence, 444 residues long: tRNA modification GTPase MnmE (444 aa).

Residues arginine 21, glutamate 79, and lysine 118 each contribute to the (6S)-5-formyl-5,6,7,8-tetrahydrofolate site. The region spanning 215-365 is the TrmE-type G domain; the sequence is GLNVVIVGKP…LVNEIKTNLK (151 aa). Asparagine 225 serves as a coordination point for K(+). GTP is bound by residues 225 to 230, 244 to 250, and 269 to 272; these read NVGKSS, SDIKGTT, and DTAG. Serine 229 provides a ligand contact to Mg(2+). K(+)-binding residues include serine 244, isoleucine 246, and threonine 249. Threonine 250 provides a ligand contact to Mg(2+). Lysine 444 provides a ligand contact to (6S)-5-formyl-5,6,7,8-tetrahydrofolate.

It belongs to the TRAFAC class TrmE-Era-EngA-EngB-Septin-like GTPase superfamily. TrmE GTPase family. As to quaternary structure, homodimer. Heterotetramer of two MnmE and two MnmG subunits. K(+) serves as cofactor.

The protein resides in the cytoplasm. Its function is as follows. Exhibits a very high intrinsic GTPase hydrolysis rate. Involved in the addition of a carboxymethylaminomethyl (cmnm) group at the wobble position (U34) of certain tRNAs, forming tRNA-cmnm(5)s(2)U34. The polypeptide is tRNA modification GTPase MnmE (Malacoplasma penetrans (strain HF-2) (Mycoplasma penetrans)).